The primary structure comprises 481 residues: 4-hydroxyphenylacetate 3-monooxygenase oxygenase component (481 aa).

Substrate is bound by residues 100 to 104 and His142; that span reads RSPDY. FAD-binding positions include 142-144, 148-151, and Thr185; these read HAL and QVNR. 197 to 198 lines the substrate pocket; sequence ST. 444–447 is an FAD binding site; the sequence is DPVR.

This sequence belongs to the FADH(2)-utilizing monooxygenase family. As to quaternary structure, homotetramer consisting of a dimer of dimers. 4-HPA 3-monooxygenase consists of a reductase component HpaC and an oxygenase component HpaB.

It carries out the reaction 4-hydroxyphenylacetate + FADH2 + O2 = 3,4-dihydroxyphenylacetate + FAD + H2O + H(+). The protein operates within aromatic compound metabolism; 4-hydroxyphenylacetate degradation; pyruvate and succinate semialdehyde from 4-hydroxyphenylacetate: step 1/7. Utilizes FADH(2) supplied by HpaC, to catalyze the hydroxylation of 4-hydroxyphenylacetic acid, leading to the production of 3,4-dihydroxyphenylacetic acid (DHPA). This Thermus thermophilus (strain ATCC 27634 / DSM 579 / HB8) protein is 4-hydroxyphenylacetate 3-monooxygenase oxygenase component.